A 561-amino-acid chain; its full sequence is DNA ligase B (561 aa).

The N6-AMP-lysine intermediate role is filled by K128.

It belongs to the NAD-dependent DNA ligase family. LigB subfamily.

It catalyses the reaction NAD(+) + (deoxyribonucleotide)n-3'-hydroxyl + 5'-phospho-(deoxyribonucleotide)m = (deoxyribonucleotide)n+m + AMP + beta-nicotinamide D-nucleotide.. Catalyzes the formation of phosphodiester linkages between 5'-phosphoryl and 3'-hydroxyl groups in double-stranded DNA using NAD as a coenzyme and as the energy source for the reaction. The chain is DNA ligase B from Pseudomonas syringae pv. syringae (strain B728a).